Consider the following 275-residue polypeptide: Translation initiation factor 2 subunit alpha (275 aa).

Residues Gly12–Lys83 form the S1 motif domain.

It belongs to the eIF-2-alpha family. As to quaternary structure, heterotrimer composed of an alpha, a beta and a gamma chain.

Functionally, eIF-2 functions in the early steps of protein synthesis by forming a ternary complex with GTP and initiator tRNA. This chain is Translation initiation factor 2 subunit alpha, found in Thermococcus kodakarensis (strain ATCC BAA-918 / JCM 12380 / KOD1) (Pyrococcus kodakaraensis (strain KOD1)).